Reading from the N-terminus, the 309-residue chain is Porphobilinogen deaminase (309 aa).

C242 is modified (S-(dipyrrolylmethanemethyl)cysteine).

This sequence belongs to the HMBS family. In terms of assembly, monomer. It depends on dipyrromethane as a cofactor.

It catalyses the reaction 4 porphobilinogen + H2O = hydroxymethylbilane + 4 NH4(+). The protein operates within porphyrin-containing compound metabolism; protoporphyrin-IX biosynthesis; coproporphyrinogen-III from 5-aminolevulinate: step 2/4. Tetrapolymerization of the monopyrrole PBG into the hydroxymethylbilane pre-uroporphyrinogen in several discrete steps. The polypeptide is Porphobilinogen deaminase (Pseudoalteromonas atlantica (strain T6c / ATCC BAA-1087)).